The chain runs to 249 residues: 2-C-methyl-D-erythritol 4-phosphate cytidylyltransferase (249 aa).

The protein belongs to the IspD/TarI cytidylyltransferase family. IspD subfamily.

It carries out the reaction 2-C-methyl-D-erythritol 4-phosphate + CTP + H(+) = 4-CDP-2-C-methyl-D-erythritol + diphosphate. It participates in isoprenoid biosynthesis; isopentenyl diphosphate biosynthesis via DXP pathway; isopentenyl diphosphate from 1-deoxy-D-xylulose 5-phosphate: step 2/6. Catalyzes the formation of 4-diphosphocytidyl-2-C-methyl-D-erythritol from CTP and 2-C-methyl-D-erythritol 4-phosphate (MEP). In Shewanella oneidensis (strain ATCC 700550 / JCM 31522 / CIP 106686 / LMG 19005 / NCIMB 14063 / MR-1), this protein is 2-C-methyl-D-erythritol 4-phosphate cytidylyltransferase.